A 138-amino-acid chain; its full sequence is Phosphoribosyl-AMP cyclohydrolase (138 aa).

Asp-84 is a Mg(2+) binding site. Cys-85 is a binding site for Zn(2+). Residues Asp-86 and Asp-88 each coordinate Mg(2+). Zn(2+) contacts are provided by Cys-102 and Cys-109.

Belongs to the PRA-CH family. As to quaternary structure, homodimer. Requires Mg(2+) as cofactor. Zn(2+) is required as a cofactor.

It localises to the cytoplasm. It carries out the reaction 1-(5-phospho-beta-D-ribosyl)-5'-AMP + H2O = 1-(5-phospho-beta-D-ribosyl)-5-[(5-phospho-beta-D-ribosylamino)methylideneamino]imidazole-4-carboxamide. Its pathway is amino-acid biosynthesis; L-histidine biosynthesis; L-histidine from 5-phospho-alpha-D-ribose 1-diphosphate: step 3/9. Its function is as follows. Catalyzes the hydrolysis of the adenine ring of phosphoribosyl-AMP. This Burkholderia multivorans (strain ATCC 17616 / 249) protein is Phosphoribosyl-AMP cyclohydrolase.